The primary structure comprises 241 residues: MRNDGGFLLWWDGLRSEMQPIHDSQGVFAVLEKEVRRLGFDYYAYGVRHTIPFTRPKTEVHGTYPKAWLERYQMQNYGAVDPAILNGLRSSEMVVWSDSLFDQSRMLWNEARDWGLCVGATLPIRAPNNLLSVLSVARDQQNISSFEREEIRLRLRCMIELLTQKLTDLEHPMLMSNPVCLSHREREILQWTADGKSSGEIAIILSISESTVNFHHKNIQKKFDAPNKTLAAAYAAALGLI.

Residues 174–239 (LMSNPVCLSH…LAAAYAAALG (66 aa)) form the HTH luxR-type domain. A DNA-binding region (H-T-H motif) is located at residues 198–217 (SGEIAIILSISESTVNFHHK).

The protein belongs to the autoinducer-regulated transcriptional regulatory protein family. Homodimer in the absence of any acyl-L-homoserine lactone. The presence of the autoinducer C4-HSL has no significant effect on dimerization whereas N-(3-oxododecanoyl)-L-homoserine lactone (3O-C12-HSL), the LasR inducer, is able to dissociate the RhlR homodimers into monomers.

Its subcellular location is the cytoplasm. Its activity is regulated as follows. Activated by interaction with the autoinducer signal molecule N-butanoyl-L-homoserine lactone (C4-HSL or BHL), the product of the RhlI synthase. Is also activated by binding to rosmarinic acid (RA), a homoserine lactone mimic produced by plants, which induces a broad quorum sensing response, including the induction of all major quorum sensing controlled virulence factors. Rosmarinic acid secretion may be a plant defense mechanism to stimulate a premature quorum sensing response. Quorum-sensing regulator that controls the expression of multiple virulence factors in response to extracellular signaling molecules called autoinducers. Involved, among others, in the transcriptional regulation of genes that are responsible for rhamnolipid surfactant biosynthesis. Acts by binding to a specific sequence in the rhlAB regulatory region, both in the presence and in the absence of its autoinducer. In the former case it activates transcription of the promoter, whereas in the latter it acts as a transcriptional repressor. Also regulates the expression of the rmlBDAC operon, encoding dTDP-L-rhamnose biosynthetic enzymes, by binding to the rml box in the promoter region. In addition, is involved in the regulation of the production of elastase (lasB) and pyocyanine. The polypeptide is HTH-type quorum-sensing regulator RhlR (Pseudomonas aeruginosa (strain ATCC 15692 / DSM 22644 / CIP 104116 / JCM 14847 / LMG 12228 / 1C / PRS 101 / PAO1)).